Here is a 930-residue protein sequence, read N- to C-terminus: Zn(2)-C6 fungal-type transcription factor FTF1c (930 aa).

A DNA-binding region (zn(2)-C6 fungal-type) is located at residues 137–164 (CIPCRRKKIRCSGEKPACEHCLRSYIPC).

It localises to the nucleus. In terms of biological role, zn(2)-C6 fungal-type transcription factor that has a role in the establishment of the fungus within the plant and/or the progress of the disease. Regulates the expression of virulence factors such as SIX1 and SIX6. This chain is Zn(2)-C6 fungal-type transcription factor FTF1c, found in Fusarium oxysporum f. sp. lycopersici (strain 4287 / CBS 123668 / FGSC 9935 / NRRL 34936) (Fusarium vascular wilt of tomato).